A 307-amino-acid chain; its full sequence is Ornithine carbamoyltransferase (307 aa).

Carbamoyl phosphate contacts are provided by residues 50–53 (STRT), Gln-77, Arg-101, and 128–131 (HPCQ). Residues Asn-160, Asp-224, and 228–229 (SM) contribute to the L-ornithine site. Carbamoyl phosphate-binding positions include 264-265 (CL) and Arg-292.

It belongs to the aspartate/ornithine carbamoyltransferase superfamily. OTCase family.

Its subcellular location is the cytoplasm. It catalyses the reaction carbamoyl phosphate + L-ornithine = L-citrulline + phosphate + H(+). It participates in amino-acid biosynthesis; L-arginine biosynthesis; L-arginine from L-ornithine and carbamoyl phosphate: step 1/3. Reversibly catalyzes the transfer of the carbamoyl group from carbamoyl phosphate (CP) to the N(epsilon) atom of ornithine (ORN) to produce L-citrulline. The protein is Ornithine carbamoyltransferase of Clavibacter sepedonicus (Clavibacter michiganensis subsp. sepedonicus).